Here is a 284-residue protein sequence, read N- to C-terminus: Bifunctional protein FolD (284 aa).

NADP(+) is bound by residues 166–168 (GAS), S191, and I232.

The protein belongs to the tetrahydrofolate dehydrogenase/cyclohydrolase family. As to quaternary structure, homodimer.

The enzyme catalyses (6R)-5,10-methylene-5,6,7,8-tetrahydrofolate + NADP(+) = (6R)-5,10-methenyltetrahydrofolate + NADPH. The catalysed reaction is (6R)-5,10-methenyltetrahydrofolate + H2O = (6R)-10-formyltetrahydrofolate + H(+). It participates in one-carbon metabolism; tetrahydrofolate interconversion. Functionally, catalyzes the oxidation of 5,10-methylenetetrahydrofolate to 5,10-methenyltetrahydrofolate and then the hydrolysis of 5,10-methenyltetrahydrofolate to 10-formyltetrahydrofolate. The polypeptide is Bifunctional protein FolD (Neisseria gonorrhoeae (strain ATCC 700825 / FA 1090)).